The sequence spans 908 residues: Glutamate receptor ionotropic, kainate 2 (908 aa).

Positions 1-31 are cleaved as a signal peptide; the sequence is MKIISPVLSNLVFSRSIKVLLCLLWIGYSQG. The Extracellular portion of the chain corresponds to 32-561; that stretch reads TTHVLRFGGI…VFSFLNPLSP (530 aa). N-linked (GlcNAc...) asparagine glycosylation is found at N67, N73, N275, N378, N412, N423, and N430. A disulfide bond links C96 and C347. The L-glutamate site is built by P516, A518, and R523. N-linked (GlcNAc...) asparagine glycosylation is present at N546. Residues 562–582 form a helical membrane-spanning segment; that stretch reads DIWMYILLAYLGVSCVLFVIA. Residues 583–638 are Cytoplasmic-facing; sequence RFSPYEWYNPHPCNPDSDVVENNFTLLNSFWFGVGALMQQGSELMPKALSTRIVGG. Residues 639 to 659 form a helical membrane-spanning segment; it reads IWWFFTLIIISSYTANLAAFL. Residues 660–819 are Extracellular-facing; the sequence is TVERMESPID…KEASALGVQN (160 aa). A689, T690, and E738 together coordinate L-glutamate. C750 and C804 form a disulfide bridge. N-linked (GlcNAc...) asparagine glycosylation is present at N751. The helical transmembrane segment at 820 to 840 threads the bilayer; that stretch reads IGGIFIVLAAGLVLSVFVAVG. Over 841-908 the chain is Cytoplasmic; that stretch reads EFLYKSKKNA…RRLPGKETMA (68 aa). Residues S846 and S868 each carry the phosphoserine; by PKC modification. A Glycyl lysine isopeptide (Lys-Gly) (interchain with G-Cter in SUMO1) cross-link involves residue K886.

This sequence belongs to the glutamate-gated ion channel (TC 1.A.10.1) family. GRIK2 subfamily. Homotetramer and heterotetramer with GRIK5. Tetramers may be formed by the dimerization of dimers. Assembles into a kainate-gated homomeric channel that does not bind AMPA. Can form functional heteromeric receptors with GRIK3. Forms a heteromeric complex with GRIK4 and GRIK5. Interacts with DLG4. Interacts (via C-terminus) with KLHL17 (via kelch repeats); the interaction targets GRIK2 for degradation via ubiquitin-proteasome pathway. Interacts with NETO2. Post-translationally, sumoylation mediates kainate receptor-mediated endocytosis and regulates synaptic transmission. Sumoylation is enhanced by PIAS3 and desumoylated by SENP1. In terms of processing, ubiquitinated. Ubiquitination regulates the GRIK2 levels at the synapse by leading kainate receptor degradation through proteasome. Phosphorylated by PKC at Ser-868 upon agonist activation, this directly enhance sumoylation. As to expression, expressed in the hippocampal mossy fiber synapses (at protein level). Most abundant in the cerebellum and the hypothalamus. Expressed in a proportion of dorsal root ganglion (DRG) neurons (13.6%); predominantly small diameter DRG neurons (75%) with the remainder expressed in medium diameter DRG neurons.

Its subcellular location is the cell membrane. The protein resides in the postsynaptic cell membrane. It carries out the reaction Ca(2+)(in) = Ca(2+)(out). It catalyses the reaction Na(+)(in) = Na(+)(out). Its activity is regulated as follows. Cold receptor activity activated by temperatures between 10-19 degrees Celsius. Functionally, ionotropic glutamate receptor that functions as a cation-permeable ligand-gated ion channel, gated by L-glutamate and the glutamatergic agonist kainic acid. L-glutamate acts as an excitatory neurotransmitter at many synapses in the central nervous system. Binding of the excitatory neurotransmitter L-glutamate induces a conformation change, leading to the opening of the cation channel, and thereby converts the chemical signal to an electrical impulse. The receptor then desensitizes rapidly and enters a transient inactive state, characterized by the presence of bound agonist. Modulates cell surface expression of NETO2. In association with GRIK3, involved in presynaptic facilitation of glutamate release at hippocampal mossy fiber synapses. Independent of its ionotropic glutamate receptor activity, acts as a thermoreceptor conferring sensitivity to cold temperatures. Functions in dorsal root ganglion neurons. Its function is as follows. Ionotropic glutamate receptor that functions as a cation-permeable ligand-gated ion channel, gated by L-glutamate and the glutamatergic agonist kainic acid. This chain is Glutamate receptor ionotropic, kainate 2 (Grik2), found in Mus musculus (Mouse).